The following is a 384-amino-acid chain: Probable endopolygalacturonase C (384 aa).

The N-terminal stretch at 1-19 (MVRQLILISSLLAAVAVRA) is a signal peptide. Positions 20-40 (APADPAHPMVTEAPDVNLVEK) are excised as a propeptide. Residues Cys-45 and Cys-63 are joined by a disulfide bond. 2 PbH1 repeats span residues 176-207 (STDLTMTDITVDNTDGDTDDLAANTDGFDIGE) and 208-229 (STYITITGAEIYNQDDCVAINS). Asp-222 functions as the Proton donor in the catalytic mechanism. Cys-224 and Cys-240 form a disulfide bridge. His-244 is a catalytic residue. 2 PbH1 repeats span residues 254–280 (RDDNTVKNVTFYDVNVLKSQQAIRIKT) and 288–310 (VSEVTYHEIAFSDATDYGIVIEQ). N-linked (GlcNAc...) asparagine glycosylation occurs at Asn-261. 2 disulfides stabilise this stretch: Cys-349–Cys-354 and Cys-373–Cys-382.

Belongs to the glycosyl hydrolase 28 family.

Its subcellular location is the secreted. The enzyme catalyses (1,4-alpha-D-galacturonosyl)n+m + H2O = (1,4-alpha-D-galacturonosyl)n + (1,4-alpha-D-galacturonosyl)m.. Functionally, involved in maceration and soft-rotting of plant tissue. Hydrolyzes the 1,4-alpha glycosidic bonds of de-esterified pectate in the smooth region of the plant cell wall. The protein is Probable endopolygalacturonase C (pgaC) of Aspergillus niger (strain ATCC MYA-4892 / CBS 513.88 / FGSC A1513).